The following is a 418-amino-acid chain: UDP-N-acetylglucosamine 1-carboxyvinyltransferase (418 aa).

Position 23-24 (23-24 (KN)) interacts with phosphoenolpyruvate. Arg92 contributes to the UDP-N-acetyl-alpha-D-glucosamine binding site. Cys116 functions as the Proton donor in the catalytic mechanism. Cys116 carries the post-translational modification 2-(S-cysteinyl)pyruvic acid O-phosphothioketal. UDP-N-acetyl-alpha-D-glucosamine is bound by residues 121-125 (RPVDL), 161-164 (KVSV), Asp306, and Ile328.

Belongs to the EPSP synthase family. MurA subfamily.

The protein localises to the cytoplasm. It catalyses the reaction phosphoenolpyruvate + UDP-N-acetyl-alpha-D-glucosamine = UDP-N-acetyl-3-O-(1-carboxyvinyl)-alpha-D-glucosamine + phosphate. Its pathway is cell wall biogenesis; peptidoglycan biosynthesis. Cell wall formation. Adds enolpyruvyl to UDP-N-acetylglucosamine. The polypeptide is UDP-N-acetylglucosamine 1-carboxyvinyltransferase (Vibrio parahaemolyticus serotype O3:K6 (strain RIMD 2210633)).